The sequence spans 278 residues: Elongation factor Ts (278 aa).

Residues 82–85 form an involved in Mg(2+) ion dislocation from EF-Tu region; it reads TDFV.

This sequence belongs to the EF-Ts family.

The protein localises to the cytoplasm. Its function is as follows. Associates with the EF-Tu.GDP complex and induces the exchange of GDP to GTP. It remains bound to the aminoacyl-tRNA.EF-Tu.GTP complex up to the GTP hydrolysis stage on the ribosome. This chain is Elongation factor Ts (tsf), found in Streptomyces coelicolor (strain ATCC BAA-471 / A3(2) / M145).